The chain runs to 107 residues: Guanylin (107 aa).

The signal sequence occupies residues 1–20; sequence MNTFLLSALCLGAWAALVGA. Positions 21-92 are excised as a propeptide; that stretch reads VTVQDGDFSF…LNRLAVIAQD (72 aa). 3 disulfides stabilise this stretch: Cys-61–Cys-74, Cys-96–Cys-104, and Cys-99–Cys-107.

The protein belongs to the guanylin family.

It localises to the secreted. Endogenous activator of intestinal guanylate cyclase. It stimulates this enzyme through the same receptor binding region as the heat-stable enterotoxins. This Cavia porcellus (Guinea pig) protein is Guanylin (GUCA2A).